Consider the following 162-residue polypeptide: Cyclic pyranopterin monophosphate synthase (162 aa).

Substrate-binding positions include 79–81 (LCH) and 117–118 (ME). Residue Asp132 is part of the active site.

This sequence belongs to the MoaC family. In terms of assembly, homohexamer; trimer of dimers.

The catalysed reaction is (8S)-3',8-cyclo-7,8-dihydroguanosine 5'-triphosphate = cyclic pyranopterin phosphate + diphosphate. Its pathway is cofactor biosynthesis; molybdopterin biosynthesis. Catalyzes the conversion of (8S)-3',8-cyclo-7,8-dihydroguanosine 5'-triphosphate to cyclic pyranopterin monophosphate (cPMP). The polypeptide is Cyclic pyranopterin monophosphate synthase (Bordetella avium (strain 197N)).